A 291-amino-acid chain; its full sequence is Flavonol synthase/flavanone 3-hydroxylase (291 aa).

The Fe2OG dioxygenase domain maps to 151 to 250 (CWYVMNINHY…RMSWPVLVSP (100 aa)). Positions 175, 177, and 231 each coordinate Fe cation.

It belongs to the iron/ascorbate-dependent oxidoreductase family. It depends on L-ascorbate as a cofactor. The cofactor is Fe cation.

Its subcellular location is the cytoplasm. It carries out the reaction a (2R,3R)-dihydroflavonol + 2-oxoglutarate + O2 = a flavonol + succinate + CO2 + H2O. The catalysed reaction is a (2S)-flavan-4-one + 2-oxoglutarate + O2 = a (2R,3R)-dihydroflavonol + succinate + CO2. The protein operates within secondary metabolite biosynthesis; flavonoid biosynthesis. Its function is as follows. Catalyzes the formation of flavonols from dihydroflavonols. It can act on dihydrokaempferol to produce kaempferol, on dihydroquercetin to produce quercitin and on dihydromyricetin to produce myricetin. The sequence is that of Flavonol synthase/flavanone 3-hydroxylase from Matthiola incana (Common stock).